We begin with the raw amino-acid sequence, 128 residues long: MFPSIVAIFVGAGLGAVLRWFLGLALNAFVPAMPLGTLAANLLGGYAIGIAAVVFTSRVGLPPEWRLFVITGFLGGLTTFSTYSVEVMTHALQGEFGWAFAVAVLHLTGSFTLTALGMWTASAWFAPA.

Helical transmembrane passes span 5-25, 35-55, 67-87, and 96-116; these read IVAI…LGLA, LGTL…AVVF, LFVI…SVEV, and FGWA…LTAL. Residues Gly75 and Thr78 each coordinate Na(+).

This sequence belongs to the fluoride channel Fluc/FEX (TC 1.A.43) family.

The protein localises to the cell inner membrane. The enzyme catalyses fluoride(in) = fluoride(out). Its activity is regulated as follows. Na(+) is not transported, but it plays an essential structural role and its presence is essential for fluoride channel function. In terms of biological role, fluoride-specific ion channel. Important for reducing fluoride concentration in the cell, thus reducing its toxicity. The chain is Fluoride-specific ion channel FluC from Burkholderia vietnamiensis (strain G4 / LMG 22486) (Burkholderia cepacia (strain R1808)).